The following is a 78-amino-acid chain: Small integral membrane protein 1 (78 aa).

Met1 carries the post-translational modification N-acetylmethionine. A compositionally biased stretch (basic and acidic residues) spans 1–18 (MQPQESHVHYSRWEDGSR). The segment at 1-20 (MQPQESHVHYSRWEDGSRDG) is disordered. The Cytoplasmic portion of the chain corresponds to 1 to 46 (MQPQESHVHYSRWEDGSRDGVSLGAVSSTEEASRCRRISQRLCTGK). Phosphoserine occurs at positions 6, 17, 22, and 27. A helical; Signal-anchor for type II membrane protein membrane pass occupies residues 47 to 67 (LGIAMKVLGGVALFWIIFILG). Over 68-78 (YLTGYYVHKCK) the chain is Extracellular. The segment at 68–78 (YLTGYYVHKCK) is displays the Vel antigen.

This sequence belongs to the SMIM1 family. Homooligomer; disulfide-linked. Highly expressed in the bone marrow and expressed at lower levels in non-hematopoietic tissues. Highly expressed in erythroleukemia cell lines. Up-regulated in CD34+ hematopoietic progenitors cultured toward red blood cells.

The protein resides in the cell membrane. In terms of biological role, regulator of red blood cell formation. This Homo sapiens (Human) protein is Small integral membrane protein 1.